Consider the following 81-residue polypeptide: 8.6 kDa transglutaminase substrate (81 aa).

Multimeric. Hemolymph; Hemocyte.

This is 8.6 kDa transglutaminase substrate from Tachypleus tridentatus (Japanese horseshoe crab).